Consider the following 344-residue polypeptide: tRNA N6-adenosine threonylcarbamoyltransferase (344 aa).

2 residues coordinate Fe cation: His-111 and His-115. Substrate is bound by residues 134–138 (LVSGG), Asp-167, Gly-180, and Asn-273. Asp-301 provides a ligand contact to Fe cation.

Belongs to the KAE1 / TsaD family. Requires Fe(2+) as cofactor.

It is found in the cytoplasm. It catalyses the reaction L-threonylcarbamoyladenylate + adenosine(37) in tRNA = N(6)-L-threonylcarbamoyladenosine(37) in tRNA + AMP + H(+). Functionally, required for the formation of a threonylcarbamoyl group on adenosine at position 37 (t(6)A37) in tRNAs that read codons beginning with adenine. Is involved in the transfer of the threonylcarbamoyl moiety of threonylcarbamoyl-AMP (TC-AMP) to the N6 group of A37, together with TsaE and TsaB. TsaD likely plays a direct catalytic role in this reaction. In Cupriavidus taiwanensis (strain DSM 17343 / BCRC 17206 / CCUG 44338 / CIP 107171 / LMG 19424 / R1) (Ralstonia taiwanensis (strain LMG 19424)), this protein is tRNA N6-adenosine threonylcarbamoyltransferase.